The sequence spans 84 residues: Toxin Cex12 (84 aa).

The signal sequence occupies residues 1 to 19 (MNSLLMITTCLILVGTVWA). Positions 20–83 (NDGYLFDKRK…ISRTPGKTCR (64 aa)) constitute an LCN-type CS-alpha/beta domain. Disulfide bonds link cysteine 31–cysteine 82, cysteine 35–cysteine 58, cysteine 44–cysteine 63, and cysteine 48–cysteine 65.

Belongs to the long (4 C-C) scorpion toxin superfamily. Sodium channel inhibitor family. Beta subfamily. In terms of tissue distribution, expressed by the venom gland.

The protein localises to the secreted. Its function is as follows. Beta toxins bind voltage-independently at site-4 of sodium channels (Nav) and shift the voltage of activation toward more negative potentials thereby affecting sodium channel activation and promoting spontaneous and repetitive firing. The polypeptide is Toxin Cex12 (Centruroides exilicauda (Bark scorpion)).